A 115-amino-acid polypeptide reads, in one-letter code: MAEQVTSARATAKTVRIAARKVRLVVDLIRGKSVAEALAILKFTPRGASPVVEKVLLSAVANAENNFDLDREDLVVSEAFVNEGPTLKRFRPRAKGSASPINKRTSHITITVTEK.

This sequence belongs to the universal ribosomal protein uL22 family. Part of the 50S ribosomal subunit.

Functionally, this protein binds specifically to 23S rRNA; its binding is stimulated by other ribosomal proteins, e.g. L4, L17, and L20. It is important during the early stages of 50S assembly. It makes multiple contacts with different domains of the 23S rRNA in the assembled 50S subunit and ribosome. Its function is as follows. The globular domain of the protein is located near the polypeptide exit tunnel on the outside of the subunit, while an extended beta-hairpin is found that lines the wall of the exit tunnel in the center of the 70S ribosome. The polypeptide is Large ribosomal subunit protein uL22 (Lactiplantibacillus plantarum (strain ATCC BAA-793 / NCIMB 8826 / WCFS1) (Lactobacillus plantarum)).